The primary structure comprises 199 residues: N-(5'-phosphoribosyl)anthranilate isomerase (199 aa).

The protein belongs to the TrpF family.

The catalysed reaction is N-(5-phospho-beta-D-ribosyl)anthranilate = 1-(2-carboxyphenylamino)-1-deoxy-D-ribulose 5-phosphate. Its pathway is amino-acid biosynthesis; L-tryptophan biosynthesis; L-tryptophan from chorismate: step 3/5. This is N-(5'-phosphoribosyl)anthranilate isomerase from Streptococcus pneumoniae (strain ATCC BAA-255 / R6).